Reading from the N-terminus, the 366-residue chain is Carboxy-cis,cis-muconate cyclase (366 aa).

Catalysis depends on residues histidine 149, arginine 197, glutamate 213, and arginine 275.

Belongs to the cycloisomerase 2 family. As to quaternary structure, homotetramer.

The enzyme catalyses 3-carboxy-2,5-dihydro-5-oxofuran-2-acetate = 3-carboxy-cis,cis-muconate. It functions in the pathway aromatic compound metabolism; beta-ketoadipate pathway; 3-carboxy-cis,cis-muconate from 3-carboxy-2,5-dihydro-5-oxofuran-2-acetate: step 1/1. Functionally, catalyzes a syn cycloisomerization. Also possesses mle activity. In Neurospora crassa (strain ATCC 24698 / 74-OR23-1A / CBS 708.71 / DSM 1257 / FGSC 987), this protein is Carboxy-cis,cis-muconate cyclase.